Consider the following 618-residue polypeptide: NAD(P)H-quinone oxidoreductase subunit 5, organellar chromatophore 2 (618 aa).

The next 17 helical transmembrane spans lie at 16–36 (LIPI…TGWI), 43–63 (TPAY…SLAL), 99–119 (LAAL…ALGY), 129–149 (FFAL…SDSL), 152–172 (SYFL…FWYA), 190–210 (GDVM…GMEF), 220–240 (NTLT…GPIG), 267–287 (SVVV…LHHS), 291–311 (IAVL…VSIA), 318–335 (TLSY…IAIA), 348–368 (AHAI…AVSN), 390–410 (LIAG…CFGL), 419–438 (APWF…LNLT), 461–481 (WQMA…PWMM), 495–515 (AITG…GAIV), 553–573 (IVSG…NGFV), and 597–617 (SYIL…SWLV).

The protein belongs to the complex I subunit 5 family. NDH is composed of at least 16 different subunits, 5 of which are encoded in the nucleus.

The protein resides in the plastid. The protein localises to the organellar chromatophore thylakoid membrane. It catalyses the reaction a plastoquinone + NADH + (n+1) H(+)(in) = a plastoquinol + NAD(+) + n H(+)(out). The enzyme catalyses a plastoquinone + NADPH + (n+1) H(+)(in) = a plastoquinol + NADP(+) + n H(+)(out). Functionally, NDH shuttles electrons from NAD(P)H:plastoquinone, via FMN and iron-sulfur (Fe-S) centers, to quinones in the photosynthetic chain and possibly in a chloroplast respiratory chain. The immediate electron acceptor for the enzyme in this species is believed to be plastoquinone. Couples the redox reaction to proton translocation, and thus conserves the redox energy in a proton gradient. The sequence is that of NAD(P)H-quinone oxidoreductase subunit 5, organellar chromatophore 2 (ndhF2) from Paulinella chromatophora.